Reading from the N-terminus, the 99-residue chain is Large ribosomal subunit protein bL27 (99 aa).

Positions M1 to F9 are excised as a propeptide.

Belongs to the bacterial ribosomal protein bL27 family. The N-terminus is cleaved by ribosomal processing cysteine protease Prp.

This is Large ribosomal subunit protein bL27 from Clostridium beijerinckii (strain ATCC 51743 / NCIMB 8052) (Clostridium acetobutylicum).